Here is a 96-residue protein sequence, read N- to C-terminus: Uteroglobin (96 aa).

The signal sequence occupies residues 1-21 (MKIAITITVVMLSICCSSASS).

It belongs to the secretoglobin family. As to quaternary structure, antiparallel homodimer; disulfide-linked. Interaction with LMBR1L is controversial. As to expression, club cells (nonciliated cells of the surface epithelium of the pulmonary airways).

It localises to the secreted. In terms of biological role, binds phosphatidylcholine, phosphatidylinositol, polychlorinated biphenyls (PCB) and weakly progesterone, potent inhibitor of phospholipase A2. This is Uteroglobin (Scgb1a1) from Mus musculus (Mouse).